The primary structure comprises 255 residues: Putative OPA3-like protein CG13603 (255 aa).

Residues 108-154 (KENKKNELAQSEKMELTNMLTEMNFRLERQDAQIREMTRVLADLDSR) adopt a coiled-coil conformation. A disordered region spans residues 168–187 (VPFDPDTPDQSASARNPKKF). Positions 212–241 (DGRNRKAKEALQHLDEVAVQLEQSLGEAAT) form a coiled coil.

It belongs to the OPA3 family.

The sequence is that of Putative OPA3-like protein CG13603 from Drosophila melanogaster (Fruit fly).